A 207-amino-acid polypeptide reads, in one-letter code: Basic helix-loop-helix transcription factor scleraxis (207 aa).

Disordered stretches follow at residues 1 to 91 (MSFA…RDRT) and 151 to 183 (AFFH…QPKQ). Over residues 73 to 91 (PGREPRQRHTANARERDRT) the composition is skewed to basic and acidic residues. The 53-residue stretch at 78–130 (RQRHTANARERDRTNSVNTAFTALRTLIPTEPADRKLSKIETLRLASSYISHL) folds into the bHLH domain. Over residues 161-171 (PLPPPPPPPPL) the composition is skewed to pro residues.

As to quaternary structure, efficient DNA binding requires dimerization with another bHLH protein. Dimerizes and binds the E-box consensus sequence with E12. As to expression, expressed in mesenchymal precursors of cartilage and in connective tissue. Highly expressed in tendons in the limb, tongue and diaphragm and in cartilage of the bronchi.

The protein resides in the nucleus. Functionally, plays an early essential role in mesoderm formation, as well as a later role in formation of somite-derived chondrogenic lineages. The chain is Basic helix-loop-helix transcription factor scleraxis (Scx) from Mus musculus (Mouse).